The following is a 351-amino-acid chain: MSQMENSTKKVESVADVEVVATENAKVEQKPTSPADAIQLKVNANSTIKNLKTLVSIVKLTESGAHIGLNPKKWNPKMANYIHAKRSNNHVIDILKTILFLDRAYKFLQEVAQNGGTVMFVGTRGRVVKELIKAEAERTNSFYVTQRWLGGTLTNFANISRSLKKFNSNLALLESEEINKYSKKEQIAINKETAKLEKFYGGIKTMKQRPDVLILVDPVNDVNAIKEARKLNIPVIALANTNADPQLIDYIIPVNNYSVKSITLILGVLADAIAELRGEPTKIVGRPDSEIVLPETKSSWRQNNYDPSKRGYNPKYVNHKSTFNKFNNKKPAEATSQAKTNEKIVIKAETN.

The segment at 302–351 is disordered; sequence QNNYDPSKRGYNPKYVNHKSTFNKFNNKKPAEATSQAKTNEKIVIKAETN. Residues 340 to 351 are compositionally biased toward basic and acidic residues; that stretch reads TNEKIVIKAETN.

This sequence belongs to the universal ribosomal protein uS2 family.

This chain is Small ribosomal subunit protein uS2, found in Ureaplasma urealyticum serovar 10 (strain ATCC 33699 / Western).